Here is a 239-residue protein sequence, read N- to C-terminus: Purine nucleoside phosphorylase DeoD-type (239 aa).

Histidine 5 serves as a coordination point for a purine D-ribonucleoside. Phosphate contacts are provided by residues glycine 21, arginine 25, arginine 44, and 88 to 91; that span reads RVGS. Residues 180-182 and 204-205 each bind a purine D-ribonucleoside; these read EME and SD. Catalysis depends on aspartate 205, which acts as the Proton donor.

This sequence belongs to the PNP/UDP phosphorylase family. Homohexamer; trimer of homodimers.

It carries out the reaction a purine D-ribonucleoside + phosphate = a purine nucleobase + alpha-D-ribose 1-phosphate. The enzyme catalyses a purine 2'-deoxy-D-ribonucleoside + phosphate = a purine nucleobase + 2-deoxy-alpha-D-ribose 1-phosphate. Functionally, catalyzes the reversible phosphorolytic breakdown of the N-glycosidic bond in the beta-(deoxy)ribonucleoside molecules, with the formation of the corresponding free purine bases and pentose-1-phosphate. The sequence is that of Purine nucleoside phosphorylase DeoD-type from Salmonella heidelberg (strain SL476).